The following is a 264-amino-acid chain: tRNA pseudouridine synthase A (264 aa).

The active-site Nucleophile is Asp51. Tyr109 is a substrate binding site.

The protein belongs to the tRNA pseudouridine synthase TruA family. In terms of assembly, homodimer.

It carries out the reaction uridine(38/39/40) in tRNA = pseudouridine(38/39/40) in tRNA. Formation of pseudouridine at positions 38, 39 and 40 in the anticodon stem and loop of transfer RNAs. This chain is tRNA pseudouridine synthase A, found in Vibrio atlanticus (strain LGP32) (Vibrio splendidus (strain Mel32)).